The primary structure comprises 163 residues: MEVGAKVPKKAGAGGRRGGGGPKKKPVSRSVKAGLQFPVGRIGRYLKQGRYSQRIGTGAPVYLAAVLEYLAAEVLELAGNAARDNKKNRIIPRHVLLAIRNDEELGKLLAGVTIAHGGVLPNINPVLLPKKTGSAAAKEAKEGKTPKSPKKATTKSPKKAAAA.

Disordered stretches follow at residues 1–30 (MEVGAKVPKKAGAGGRRGGGGPKKKPVSRS) and 134–163 (SAAAKEAKEGKTPKSPKKATTKSPKKAAAA). The span at 12–21 (GAGGRRGGGG) shows a compositional bias: gly residues. Residues 147–163 (KSPKKATTKSPKKAAAA) are compositionally biased toward basic residues. 2 consecutive short sequence motifs (SPKK motif) follow at residues 148-151 (SPKK) and 156-159 (SPKK).

Belongs to the histone H2A family. The nucleosome is a histone octamer containing two molecules each of H2A, H2B, H3 and H4 assembled in one H3-H4 heterotetramer and two H2A-H2B heterodimers. The octamer wraps approximately 147 bp of DNA.

The protein localises to the nucleus. It localises to the chromosome. Functionally, core component of nucleosome. Nucleosomes wrap and compact DNA into chromatin, limiting DNA accessibility to the cellular machineries which require DNA as a template. Histones thereby play a central role in transcription regulation, DNA repair, DNA replication and chromosomal stability. DNA accessibility is regulated via a complex set of post-translational modifications of histones, also called histone code, and nucleosome remodeling. The chain is Probable histone H2A.4 from Oryza sativa subsp. indica (Rice).